The sequence spans 201 residues: Probable cytokinin riboside 5'-monophosphate phosphoribohydrolase LOG6 (201 aa).

Residues Glu-89, 107-108 (RK), 124-130 (GYGTLEE), and Thr-136 contribute to the substrate site.

Belongs to the LOG family.

It catalyses the reaction N(6)-(dimethylallyl)adenosine 5'-phosphate + H2O = N(6)-dimethylallyladenine + D-ribose 5-phosphate. It carries out the reaction 9-ribosyl-trans-zeatin 5'-phosphate + H2O = trans-zeatin + D-ribose 5-phosphate. Cytokinin-activating enzyme working in the direct activation pathway. Phosphoribohydrolase that converts inactive cytokinin nucleotides to the biologically active free-base forms. This chain is Probable cytokinin riboside 5'-monophosphate phosphoribohydrolase LOG6 (LOG6), found in Arabidopsis thaliana (Mouse-ear cress).